Reading from the N-terminus, the 134-residue chain is Estradiol 17-beta-dehydrogenase 8 (134 aa).

Ser38 is a binding site for substrate. N6-succinyllysine is present on Lys42. Tyr51 serves as the catalytic Proton acceptor. Residues 51–55 (YAASK) and 84–86 (IAT) each bind NAD(+). Position 55 is an N6-succinyllysine (Lys55).

This sequence belongs to the short-chain dehydrogenases/reductases (SDR) family. Heterotetramer with CBR4; contains two molecules of HSD17B8 and CBR4.

The protein resides in the mitochondrion matrix. The catalysed reaction is 17beta-estradiol + NAD(+) = estrone + NADH + H(+). The enzyme catalyses 17beta-estradiol + NADP(+) = estrone + NADPH + H(+). It carries out the reaction testosterone + NAD(+) = androst-4-ene-3,17-dione + NADH + H(+). The protein operates within steroid biosynthesis; estrogen biosynthesis. It functions in the pathway lipid metabolism; fatty acid biosynthesis. Its function is as follows. NAD-dependent 17-beta-hydroxysteroid dehydrogenase with highest activity towards estradiol. Has very low activity towards testosterone. The heterotetramer with CBR4 has NADH-dependent 3-ketoacyl-acyl carrier protein reductase activity, and thereby plays a role in mitochondrial fatty acid biosynthesis. Within the heterotetramer, HSD17B8 binds NADH; CBR4 binds NADPD. This is Estradiol 17-beta-dehydrogenase 8 (HSD17B8) from Callithrix jacchus (White-tufted-ear marmoset).